Consider the following 283-residue polypeptide: Serine/threonine-protein phosphatase Pgam5, mitochondrial (283 aa).

A helical transmembrane segment spans residues 7 to 23; the sequence is MYGLPSAAVAVGTALLN.

It belongs to the phosphoglycerate mutase family. BPG-dependent PGAM subfamily. Interacts with skn-1.

The protein resides in the mitochondrion outer membrane. It carries out the reaction O-phospho-L-seryl-[protein] + H2O = L-seryl-[protein] + phosphate. The catalysed reaction is O-phospho-L-threonyl-[protein] + H2O = L-threonyl-[protein] + phosphate. Functionally, displays phosphatase activity for serine/threonine residues. Has apparently no phosphoglycerate mutase activity. The chain is Serine/threonine-protein phosphatase Pgam5, mitochondrial (pgam-5) from Caenorhabditis briggsae.